A 305-amino-acid polypeptide reads, in one-letter code: Ribosomal RNA small subunit methyltransferase H (305 aa).

S-adenosyl-L-methionine-binding positions include 30-32 (GGH), Asp49, Phe74, Asp96, and Gln103.

The protein belongs to the methyltransferase superfamily. RsmH family.

It localises to the cytoplasm. It catalyses the reaction cytidine(1402) in 16S rRNA + S-adenosyl-L-methionine = N(4)-methylcytidine(1402) in 16S rRNA + S-adenosyl-L-homocysteine + H(+). Functionally, specifically methylates the N4 position of cytidine in position 1402 (C1402) of 16S rRNA. This is Ribosomal RNA small subunit methyltransferase H from Francisella tularensis subsp. holarctica (strain LVS).